Reading from the N-terminus, the 425-residue chain is Neuromedin-U receptor 1 (425 aa).

Residues 1 to 59 (MTPPCLNCSFFPGQLSPNASTGLLSCNDSEFKEHFDLEDLNLTHEDLRLKYLGPQQVKQ) are Extracellular-facing. N-linked (GlcNAc...) asparagine glycosylation occurs at asparagine 41. The chain crosses the membrane as a helical span at residues 60–80 (FLPICVTYLLIFVVGTLGNGL). The Cytoplasmic segment spans residues 81-96 (TCTVILRQKAMHTPTN). The chain crosses the membrane as a helical span at residues 97–117 (FYLFSLAVSDLLVLLVGLPLE). Topologically, residues 118–137 (LYEMQHNYPFQLGAGGCYFR) are extracellular. Cysteine 134 and cysteine 219 are joined by a disulfide. A helical transmembrane segment spans residues 138 to 158 (ILLLETVCLASVLNVTALSVE). At 159–181 (RYVAVVHPLQAKSVMTRTHVRRM) the chain is on the cytoplasmic side. A helical transmembrane segment spans residues 182–202 (LGAIWVFAILFSLPNTSLHGL). Over 203 to 235 (SPLYVPCRGPVPDSVTCTLVRPQFFYKLVIQTT) the chain is Extracellular. A helical transmembrane segment spans residues 236-256 (ILLFFCLPMVTISVLYLLIGL). Topologically, residues 257–294 (RLRRERILLQEEVKGRISAAARQASHRSIQLRDRERRQ) are cytoplasmic. Residues 295-315 (VTKMLIALVIVFGTCWVPFHA) form a helical membrane-spanning segment. Residues 316–331 (DRLMWSMVSHWTDGLR) lie on the Extracellular side of the membrane. A helical membrane pass occupies residues 332 to 352 (LAFQSVHLASGVFLYLGSAAN). At 353-425 (PVLYNLMSTR…GCEQETDPPE (73 aa)) the chain is on the cytoplasmic side. Positions 406–425 (DVPLAENRDPGCEQETDPPE) are disordered.

The protein belongs to the G-protein coupled receptor 1 family. In terms of tissue distribution, highly expressed in the small intestine and lung. Low expression in the central nervous system.

The protein localises to the cell membrane. In terms of biological role, receptor for the neuromedin-U and neuromedin-S neuropeptides. In Rattus norvegicus (Rat), this protein is Neuromedin-U receptor 1 (Nmur1).